The following is a 192-amino-acid chain: Orotate phosphoribosyltransferase (192 aa).

116-124 serves as a coordination point for 5-phospho-alpha-D-ribose 1-diphosphate; sequence EDVVTTGKS. Orotate contacts are provided by Thr120 and Arg148.

It belongs to the purine/pyrimidine phosphoribosyltransferase family. PyrE subfamily. In terms of assembly, homodimer. Mg(2+) is required as a cofactor.

The enzyme catalyses orotidine 5'-phosphate + diphosphate = orotate + 5-phospho-alpha-D-ribose 1-diphosphate. Its pathway is pyrimidine metabolism; UMP biosynthesis via de novo pathway; UMP from orotate: step 1/2. In terms of biological role, catalyzes the transfer of a ribosyl phosphate group from 5-phosphoribose 1-diphosphate to orotate, leading to the formation of orotidine monophosphate (OMP). The chain is Orotate phosphoribosyltransferase from Clostridium perfringens (strain ATCC 13124 / DSM 756 / JCM 1290 / NCIMB 6125 / NCTC 8237 / Type A).